We begin with the raw amino-acid sequence, 475 residues long: UDP-N-acetylmuramate--L-alanine ligase (475 aa).

Gly-114–Thr-120 contacts ATP.

It belongs to the MurCDEF family.

The protein resides in the cytoplasm. The catalysed reaction is UDP-N-acetyl-alpha-D-muramate + L-alanine + ATP = UDP-N-acetyl-alpha-D-muramoyl-L-alanine + ADP + phosphate + H(+). The protein operates within cell wall biogenesis; peptidoglycan biosynthesis. Its function is as follows. Cell wall formation. The chain is UDP-N-acetylmuramate--L-alanine ligase from Bartonella tribocorum (strain CIP 105476 / IBS 506).